We begin with the raw amino-acid sequence, 421 residues long: 2-deoxystreptamine N-acetyl-D-glucosaminyltransferase (421 aa).

This sequence belongs to the glycosyltransferase group 1 family. Glycosyltransferase 4 subfamily.

The catalysed reaction is 2-deoxystreptamine + UDP-N-acetyl-alpha-D-glucosamine = 2'-N-acetylparomamine + UDP + H(+). The protein operates within antibiotic biosynthesis; neomycin biosynthesis. Its function is as follows. Glycosyltransferase involved in the biosynthesis of neomycin by mediating conversion of 2-deoxystreptamine (2-DOS) to 2'-N-acetylparomamine using UDP-alpha-D-glucosamine as sugar donor. The protein is 2-deoxystreptamine N-acetyl-D-glucosaminyltransferase (neoD) of Streptomyces fradiae (Streptomyces roseoflavus).